The sequence spans 185 residues: MVSSWRVQQAAQDIRAGAVIAYPTEAVWGLGCDPWDEEAVYRLLAIKSRPVEKGLILIADNIRQFDFLFEDFPELWLDRMASTWPGPNTWLVPHQNLLPEWITGIHETVALRVTDHPTVRELCALVGPLISTSANPAGRPAARSRLRVEQYFRGQIDGVLGGSLGGRRNPSVIRDIATAQIVRAG.

The YrdC-like domain occupies 4–185; it reads SWRVQQAAQD…IATAQIVRAG (182 aa).

It belongs to the SUA5 family. TsaC subfamily.

It localises to the cytoplasm. The enzyme catalyses L-threonine + hydrogencarbonate + ATP = L-threonylcarbamoyladenylate + diphosphate + H2O. Functionally, required for the formation of a threonylcarbamoyl group on adenosine at position 37 (t(6)A37) in tRNAs that read codons beginning with adenine. Catalyzes the conversion of L-threonine, HCO(3)(-)/CO(2) and ATP to give threonylcarbamoyl-AMP (TC-AMP) as the acyladenylate intermediate, with the release of diphosphate. The protein is Threonylcarbamoyl-AMP synthase of Pseudomonas syringae pv. syringae (strain B728a).